We begin with the raw amino-acid sequence, 37 residues long: Potassium channel toxin alpha-KTx 1.13 (37 aa).

Gln1 is subject to Pyrrolidone carboxylic acid. Cystine bridges form between Cys7-Cys28, Cys13-Cys33, and Cys17-Cys35. Residues 26 to 33 (GKCMNKKC) are interaction with Ca(2+)-activated K(+) channels.

The protein belongs to the short scorpion toxin superfamily. Potassium channel inhibitor family. Alpha-KTx 01 subfamily. In terms of tissue distribution, expressed by the venom gland.

It is found in the secreted. Functionally, potent selective inhibitor of high conductance (maxi-K), different medium and small conductance calcium-activated potassium channels (KCa1.1/KCNMA1 and others), as well as a voltage-dependent potassium channel (Kv1.3/KCNA3&gt;Kv1.2/KCNA2&gt;Kv1.6/KCNA3&gt;&gt;Shaker/Sh). It blocks channel activity by a simple bimolecular inhibition process. In terms of biological role, has a pH-specific antimicrobial activity against bacteria (B.subtilis, E.coli and S.aureus) and the fungus C.albicans. This is Potassium channel toxin alpha-KTx 1.13 from Leiurus hebraeus (Hebrew deathstalker scorpion).